The following is a 205-amino-acid chain: NADH-quinone oxidoreductase subunit J (205 aa).

5 consecutive transmembrane segments (helical) span residues 1–21, 26–46, 54–74, 89–109, and 142–162; these read MPIF…CVVL, VYSV…MILL, LLIV…IMML, LSLS…TIIL, and FMLP…SCIT.

This sequence belongs to the complex I subunit 6 family.

It localises to the cell membrane. It catalyses the reaction a quinone + NADH + 5 H(+)(in) = a quinol + NAD(+) + 4 H(+)(out). Its function is as follows. NDH-1 shuttles electrons from NADH, via FMN and iron-sulfur (Fe-S) centers, to quinones in the respiratory chain. Couples the redox reaction to proton translocation (for every two electrons transferred, four hydrogen ions are translocated across the cytoplasmic membrane), and thus conserves the redox energy in a proton gradient. The protein is NADH-quinone oxidoreductase subunit J (nuoJ) of Rickettsia prowazekii (strain Madrid E).